We begin with the raw amino-acid sequence, 416 residues long: N-acetyl-L-cysteine deacetylase (416 aa).

Positions 128, 130, 164, 188, and 380 each coordinate Zn(2+).

Belongs to the peptidase M20 family. Requires Zn(2+) as cofactor. The cofactor is Co(2+).

It catalyses the reaction N-acetyl-L-cysteine + H2O = L-cysteine + acetate. It functions in the pathway amino-acid metabolism. Involved in a cysteine salvage pathway from S-alkylcysteine. Catalyzes the last step in this pathway, i.e. the deacetylation of N-acetyl-L-cysteine. This pathway is likely important in the catabolism of alkylated cysteine generated by proteolysis of alkylated glutathione formed in the detoxification of a wide range of electrophiles. The chain is N-acetyl-L-cysteine deacetylase from Bacillus subtilis (strain 168).